The following is a 67-amino-acid chain: Large ribosomal subunit protein bL31 (67 aa).

Zn(2+)-binding residues include Cys16, Cys18, Cys36, and Cys39.

This sequence belongs to the bacterial ribosomal protein bL31 family. Type A subfamily. Part of the 50S ribosomal subunit. Zn(2+) serves as cofactor.

Functionally, binds the 23S rRNA. The protein is Large ribosomal subunit protein bL31 of Treponema denticola (strain ATCC 35405 / DSM 14222 / CIP 103919 / JCM 8153 / KCTC 15104).